We begin with the raw amino-acid sequence, 113 residues long: Cell cycle protein GpsB (113 aa).

Residues 36 to 68 (LDMVIKDYSTFTQEIEALQAENIRLVQELDNAP) adopt a coiled-coil conformation.

It belongs to the GpsB family. As to quaternary structure, forms polymers through the coiled coil domains. Interacts with PBP1, MreC and EzrA.

The protein resides in the cytoplasm. Functionally, divisome component that associates with the complex late in its assembly, after the Z-ring is formed, and is dependent on DivIC and PBP2B for its recruitment to the divisome. Together with EzrA, is a key component of the system that regulates PBP1 localization during cell cycle progression. Its main role could be the removal of PBP1 from the cell pole after pole maturation is completed. Also contributes to the recruitment of PBP1 to the division complex. Not essential for septum formation. This is Cell cycle protein GpsB from Listeria welshimeri serovar 6b (strain ATCC 35897 / DSM 20650 / CCUG 15529 / CIP 8149 / NCTC 11857 / SLCC 5334 / V8).